Consider the following 239-residue polypeptide: Ribonuclease 3 (239 aa).

One can recognise an RNase III domain in the interval 12–137 (REKVEAVIGY…LIAAIYLDAG (126 aa)). Residue Glu-50 participates in Mg(2+) binding. Asp-54 is a catalytic residue. Mg(2+) is bound by residues Asp-123 and Glu-126. Glu-126 is a catalytic residue. The 70-residue stretch at 162–231 (DAKTELQEWA…ATRLLEREGV (70 aa)) folds into the DRBM domain.

The protein belongs to the ribonuclease III family. In terms of assembly, homodimer. Requires Mg(2+) as cofactor.

Its subcellular location is the cytoplasm. It carries out the reaction Endonucleolytic cleavage to 5'-phosphomonoester.. In terms of biological role, digests double-stranded RNA. Involved in the processing of primary rRNA transcript to yield the immediate precursors to the large and small rRNAs (23S and 16S). Processes some mRNAs, and tRNAs when they are encoded in the rRNA operon. Processes pre-crRNA and tracrRNA of type II CRISPR loci if present in the organism. The sequence is that of Ribonuclease 3 from Allorhizobium ampelinum (strain ATCC BAA-846 / DSM 112012 / S4) (Agrobacterium vitis (strain S4)).